Here is a 490-residue protein sequence, read N- to C-terminus: Cytochrome P450 2C26 (490 aa).

C435 lines the heme pocket.

It belongs to the cytochrome P450 family. It depends on heme as a cofactor.

It is found in the endoplasmic reticulum membrane. The protein resides in the microsome membrane. The enzyme catalyses an organic molecule + reduced [NADPH--hemoprotein reductase] + O2 = an alcohol + oxidized [NADPH--hemoprotein reductase] + H2O + H(+). Its function is as follows. Catalyzes the hydroxylation of tolbutamide and the N-demethylation of aminopyrine and benzphetamine. The chain is Cytochrome P450 2C26 (CYP2C26) from Mesocricetus auratus (Golden hamster).